Reading from the N-terminus, the 208-residue chain is Uracil phosphoribosyltransferase (208 aa).

Residues R78, R103, and D130–S138 contribute to the 5-phospho-alpha-D-ribose 1-diphosphate site. Uracil-binding positions include I193 and G198–A200. 5-phospho-alpha-D-ribose 1-diphosphate is bound at residue D199.

The protein belongs to the UPRTase family. Mg(2+) serves as cofactor.

The catalysed reaction is UMP + diphosphate = 5-phospho-alpha-D-ribose 1-diphosphate + uracil. Its pathway is pyrimidine metabolism; UMP biosynthesis via salvage pathway; UMP from uracil: step 1/1. With respect to regulation, allosterically activated by GTP. Its function is as follows. Catalyzes the conversion of uracil and 5-phospho-alpha-D-ribose 1-diphosphate (PRPP) to UMP and diphosphate. The polypeptide is Uracil phosphoribosyltransferase (Pectobacterium carotovorum subsp. carotovorum (strain PC1)).